A 187-amino-acid chain; its full sequence is Cytochrome b-245 chaperone 1 (187 aa).

A helical membrane pass occupies residues 20–42 (GIRSWSLLVGILSTGLAAAYYSG). Residues 167–187 (ESPSERSQSSDSEPDGPGGQS) form a disordered region. Residues S168 and S170 each carry the phosphoserine modification.

The protein belongs to the CYBC1 family. Interacts with CYBB; CYBC1 may act as a chaperone stabilizing Cytochrome b-245 heterodimer.

The protein resides in the endoplasmic reticulum membrane. In terms of biological role, functions as a chaperone necessary for a stable expression of the CYBA and CYBB subunits of the cytochrome b-245 heterodimer. Controls the phagocyte respiratory burst and is essential for innate immunity. This is Cytochrome b-245 chaperone 1 from Rattus norvegicus (Rat).